The chain runs to 26 residues: Nicotinic acetylcholine receptor-binding protein Mnn-1A (26 aa).

C3 and C22 form a disulfide bridge.

The protein belongs to the three-finger toxin family. Short-chain subfamily. In terms of tissue distribution, expressed by the venom gland.

The protein localises to the secreted. Functionally, binds and may inhibit nicotinic acetylcholine receptors (nAChR). The sequence is that of Nicotinic acetylcholine receptor-binding protein Mnn-1A from Micrurus nigrocinctus (Central American coral snake).